Reading from the N-terminus, the 102-residue chain is ATP-dependent Clp protease adapter protein ClpS (102 aa).

Belongs to the ClpS family. In terms of assembly, binds to the N-terminal domain of the chaperone ClpA.

Involved in the modulation of the specificity of the ClpAP-mediated ATP-dependent protein degradation. This chain is ATP-dependent Clp protease adapter protein ClpS, found in Nitrosospira multiformis (strain ATCC 25196 / NCIMB 11849 / C 71).